Here is a 273-residue protein sequence, read N- to C-terminus: Sulfur carrier protein FdhD (273 aa).

Cys124 serves as the catalytic Cysteine persulfide intermediate. Residue 263 to 268 coordinates Mo-bis(molybdopterin guanine dinucleotide); that stretch reads FCRQSR.

It belongs to the FdhD family.

The protein resides in the cytoplasm. Its function is as follows. Required for formate dehydrogenase (FDH) activity. Acts as a sulfur carrier protein that transfers sulfur from IscS to the molybdenum cofactor prior to its insertion into FDH. This is Sulfur carrier protein FdhD from Acinetobacter baylyi (strain ATCC 33305 / BD413 / ADP1).